The following is a 604-amino-acid chain: Aspartate--tRNA(Asp/Asn) ligase (604 aa).

Residue E168 coordinates L-aspartate. The aspartate stretch occupies residues 192-195; that stretch reads QLFK. R214 is a binding site for L-aspartate. Residues 214–216 and Q223 each bind ATP; that span reads RDE. H446 lines the L-aspartate pocket. E480 contributes to the ATP binding site. R487 lines the L-aspartate pocket. 532–535 is a binding site for ATP; it reads GWDR. The interval 575-604 is disordered; sequence LEAGVDARPKPEARAQAGTAGPAAPVADPT. Over residues 577-587 the composition is skewed to basic and acidic residues; that stretch reads AGVDARPKPEA. The segment covering 588-604 has biased composition (low complexity); the sequence is RAQAGTAGPAAPVADPT.

It belongs to the class-II aminoacyl-tRNA synthetase family. Type 1 subfamily. In terms of assembly, homodimer.

The protein resides in the cytoplasm. It carries out the reaction tRNA(Asx) + L-aspartate + ATP = L-aspartyl-tRNA(Asx) + AMP + diphosphate. Its function is as follows. Aspartyl-tRNA synthetase with relaxed tRNA specificity since it is able to aspartylate not only its cognate tRNA(Asp) but also tRNA(Asn). Reaction proceeds in two steps: L-aspartate is first activated by ATP to form Asp-AMP and then transferred to the acceptor end of tRNA(Asp/Asn). This chain is Aspartate--tRNA(Asp/Asn) ligase, found in Salinispora arenicola (strain CNS-205).